The chain runs to 342 residues: Prenyl transferase penC (342 aa).

Residues 17-37 traverse the membrane as a helical segment; it reads LSYLTLTVGALALVVVLYISI. Residue histidine 110 participates in isopentenyl diphosphate binding. Mg(2+) is bound by residues aspartate 117 and aspartate 121. Arginine 126 is a binding site for dimethylallyl diphosphate. N-linked (GlcNAc...) asparagine glycosylation is present at asparagine 154. Lysine 210 serves as a coordination point for dimethylallyl diphosphate.

The protein belongs to the FPP/GGPP synthase family.

Its subcellular location is the membrane. The protein operates within secondary metabolite biosynthesis. Prenyl transferase; part of the gene cluster that mediates the biosynthesis of the indole diterpenes penitrems. The geranylgeranyl diphosphate (GGPP) synthase penG catalyzes the first step in penitrem biosynthesis via conversion of farnesyl pyrophosphate and isopentyl pyrophosphate into geranylgeranyl pyrophosphate (GGPP). Condensation of indole-3-glycerol phosphate with GGPP by the prenyl transferase penC then forms 3-geranylgeranylindole (3-GGI). Epoxidation by the FAD-dependent monooxygenase penM leads to a epoxidized-GGI that is substrate of the terpene cyclase penB for cyclization to yield paspaline. Paspaline is subsequently converted to 13-desoxypaxilline by the cytochrome P450 monooxygenase penP, the latter being then converted to paxilline by the cytochrome P450 monooxygenase penQ. Paxilline is converted to beta-paxitriol via C-10 ketoreduction by the short-chain dehydrogenase PC-15 which can be monoprenylated at the C-20 by the indole diterpene prenyltransferase penD. A two-step elimination (acetylation and elimination) process performed by the O-acetyltransferase PC-16 and the P.simplicissimum ptmI-ortholog not yet identified in P.crustosum, leads to the production of the prenylated form of penijanthine. The FAD-linked oxidoreductase ptmO then converts the prenylated form of penijanthine into PC-M5 which is in turn transformed into PC-M4 by the aromatic dimethylallyltransferase PC-22. A series of oxidation steps involving 4 cytochrome P450 monooxygenases (PC-21, PC-05, PC-23, PC-20) and a FAD-dependent monooxygenase (PC-14) are required for the transformation of PC-M4 to penitrems A and E. Synthesis of these final products is proposed to proceed via penitrems D and C (PC-21, PC-05, PC-14) and penitrems B and F (PC-21, PC-05, PC-14, PC-23). The sequence is that of Prenyl transferase penC from Penicillium crustosum (Blue mold fungus).